Consider the following 244-residue polypeptide: 5-oxoprolinase subunit A (244 aa).

This sequence belongs to the LamB/PxpA family. As to quaternary structure, forms a complex composed of PxpA, PxpB and PxpC.

The enzyme catalyses 5-oxo-L-proline + ATP + 2 H2O = L-glutamate + ADP + phosphate + H(+). Catalyzes the cleavage of 5-oxoproline to form L-glutamate coupled to the hydrolysis of ATP to ADP and inorganic phosphate. The polypeptide is 5-oxoprolinase subunit A (Salmonella paratyphi A (strain ATCC 9150 / SARB42)).